Consider the following 645-residue polypeptide: Threonine--tRNA ligase (645 aa).

The 63-residue stretch at 1–63 (MDQIKIKFPD…ESDGDIEIVT (63 aa)) folds into the TGS domain. Residues 242-540 (DHRKIGKELE…LTEETKGAFP (299 aa)) form a catalytic region. 3 residues coordinate Zn(2+): C336, H387, and H517.

Belongs to the class-II aminoacyl-tRNA synthetase family. In terms of assembly, homodimer. It depends on Zn(2+) as a cofactor.

The protein localises to the cytoplasm. It carries out the reaction tRNA(Thr) + L-threonine + ATP = L-threonyl-tRNA(Thr) + AMP + diphosphate + H(+). Functionally, catalyzes the attachment of threonine to tRNA(Thr) in a two-step reaction: L-threonine is first activated by ATP to form Thr-AMP and then transferred to the acceptor end of tRNA(Thr). Also edits incorrectly charged L-seryl-tRNA(Thr). The sequence is that of Threonine--tRNA ligase from Staphylococcus saprophyticus subsp. saprophyticus (strain ATCC 15305 / DSM 20229 / NCIMB 8711 / NCTC 7292 / S-41).